We begin with the raw amino-acid sequence, 605 residues long: F-box/WD repeat-containing protein 1A (605 aa).

The homodimerization domain D stretch occupies residues 128–177 (ASYEKEKELCVKYFEQWSESDQVEFVEHLISQMCHYQHGHINSYLKPMLQ). Positions 190–228 (DHIAENILSYLDAKSLCAAELVCKEWYRVTSDGMLWKKL) constitute an F-box domain. Residues 190–228 (DHIAENILSYLDAKSLCAAELVCKEWYRVTSDGMLWKKL) form a required for down-regulation of SNAI1 region. WD repeat units follow at residues 301 to 338 (ETSK…CKRI), 341 to 378 (GHTG…MLNT), 381 to 418 (HHCE…DITL), 424 to 461 (GHRA…FVRT), 464 to 503 (GHKR…RVLE), 505 to 541 (HEEL…DPRA), and 553 to 590 (EHSG…AAQA).

In terms of assembly, homodimer. Self-associates. Component of the SCF(BTRC) complex formed of CUL1, SKP1, RBX1 and a BTRC dimer. Direct interaction with SKP1 occurs via the F-box domain. Interacts with phosphorylated ubiquitination substrates SMAD3 and SMAD4. Interacts with phosphorylated ubiquitination substrates CTNNB1, NFKBIA, NFKBIB, NFKBIE, NFKB1/nuclear factor NF-kappa-B p105 subunit, ATF4, CDC25A, DLG1, FBXO5 and SNAI1; the interaction requires the phosphorylation of the 2 serine residues in the substrate destruction motif D-S-G-X(2,3,4)-S. Binds UBQLN1. Interacts with CDC34 and UBE2R2. Interacts with FBXW11. Interacts with CUL4A and DDB1. Part of a SCF(BTRC)-like complex lacking CUL1, which is associated with phosphorylated NKBIA and RELA; RELA interacts directly with NFKBIA. Interacts with the phosphorylated form of GLI3. Interacts with CLU. Interacts with PER1 (phosphorylated), PER2 (phosphorylated) and PER3. Interacts with phosphorylated ubiquitination substrate CEP68. Interacts with ZC3H12A; this interaction occurs when ZC3H12A is phosphorylated in a IKBKB/IKKB-dependent manner. Interacts with HSF1; this interaction occurs during mitosis and induces HSF1 ubiquitin-dependent degradation, a process inhibited by CDC20. Interacts with NFE2L1. Interacts with INAVA. Interacts with IL10RA; this interaction leads to IL10RA ubiquitination and subsequent degradation. Interacts with REST. Interacts with KLF4; this interaction leads to KLF4 ubiquitination and subsequent degradation. Interacts with UBR2, as part of a SCF(BTRC) complex; the interaction mediates 'Lys-48'-linked ubiquitination of UBR2 and is regulated by DUSP22 in the T-cell receptor signaling pathway. (Microbial infection) Interacts with vaccinia virus A49; this interaction inhibits NF-kappa-B activation. As to quaternary structure, (Microbial infection) Interacts with HIV-1 Vpu. In terms of processing, ubiquitinated. Deubiquitinated by OTUD5, promoting its stability. Expressed in epididymis (at protein level).

The protein resides in the cytoplasm. It localises to the nucleus. The protein operates within protein modification; protein ubiquitination. Its function is as follows. Substrate recognition component of a SCF (SKP1-CUL1-F-box protein) E3 ubiquitin-protein ligase complex which mediates the ubiquitination and subsequent proteasomal degradation of target proteins. Recognizes and binds to phosphorylated target proteins. SCF(BTRC) mediates the ubiquitination of CTNNB1 and participates in Wnt signaling. SCF(BTRC) mediates the ubiquitination of phosphorylated NFKB1, ATF4, CDC25A, DLG1, FBXO5, PER1, SMAD3, SMAD4, SNAI1 and probably NFKB2. SCF(BTRC) mediates the ubiquitination of NFKBIA, NFKBIB and NFKBIE; the degradation frees the associated NFKB1 to translocate into the nucleus and to activate transcription. Ubiquitination of NFKBIA occurs at 'Lys-21' and 'Lys-22'. The SCF(FBXW11) complex also regulates NF-kappa-B by mediating ubiquitination of phosphorylated NFKB1: specifically ubiquitinates the p105 form of NFKB1, leading to its degradation. SCF(BTRC) mediates the ubiquitination of CEP68; this is required for centriole separation during mitosis. SCF(BTRC) mediates the ubiquitination and subsequent degradation of nuclear NFE2L1. Has an essential role in the control of the clock-dependent transcription via degradation of phosphorylated PER1 and PER2. May be involved in ubiquitination and subsequent proteasomal degradation through a DBB1-CUL4 E3 ubiquitin-protein ligase. Required for activation of NFKB-mediated transcription by IL1B, MAP3K14, MAP3K1, IKBKB and TNF. Required for proteolytic processing of GLI3. Mediates ubiquitination of REST, thereby leading to its proteasomal degradation. SCF(BTRC) mediates the ubiquitination and subsequent proteasomal degradation of KLF4; thereby negatively regulating cell pluripotency maintenance and embryogenesis. SCF(BTRC) acts as a regulator of mTORC1 signaling pathway by catalyzing ubiquitination and subsequent proteasomal degradation of phosphorylated DEPTOR, TFE3 and MITF. SCF(BTRC) directs 'Lys-48'-linked ubiquitination of UBR2 in the T-cell receptor signaling pathway. This is F-box/WD repeat-containing protein 1A (BTRC) from Homo sapiens (Human).